A 101-amino-acid chain; its full sequence is Interleukin-8 (101 aa).

The signal sequence occupies residues 1–22 (MPSQLRVAVLAAFLLSAVLCEG). Intrachain disulfides connect cysteine 34/cysteine 61 and cysteine 36/cysteine 77.

The protein belongs to the intercrine alpha (chemokine CxC) family. In terms of assembly, homodimer. Interacts with TNFAIP6 (via Link domain); this interaction interferes with chemokine binding to glycosaminoglycans.

Its subcellular location is the secreted. Chemotactic factor that mediates inflammatory response by attracting neutrophils, basophils, and T-cells to clear pathogens and protect the host from infection. Also plays an important role in neutrophil activation. Released in response to an inflammatory stimulus, exerts its effect by binding to the G-protein-coupled receptors CXCR1 and CXCR2, primarily found in neutrophils, monocytes and endothelial cells. G-protein heterotrimer (alpha, beta, gamma subunits) constitutively binds to CXCR1/CXCR2 receptor and activation by IL8 leads to beta and gamma subunits release from Galpha (GNAI2 in neutrophils) and activation of several downstream signaling pathways including PI3K and MAPK pathways. The sequence is that of Interleukin-8 (CXCL8) from Cavia porcellus (Guinea pig).